A 104-amino-acid chain; its full sequence is Large ribosomal subunit protein uL24 (104 aa).

Belongs to the universal ribosomal protein uL24 family. Part of the 50S ribosomal subunit.

Its function is as follows. One of two assembly initiator proteins, it binds directly to the 5'-end of the 23S rRNA, where it nucleates assembly of the 50S subunit. In terms of biological role, one of the proteins that surrounds the polypeptide exit tunnel on the outside of the subunit. This Shewanella loihica (strain ATCC BAA-1088 / PV-4) protein is Large ribosomal subunit protein uL24.